The primary structure comprises 541 residues: Membrane protein insertase YidC (541 aa).

Helical transmembrane passes span 7-27 (LLFMALLFISFLIYQQWQVDY), 345-365 (LVQNWGLAIIGVTLVVKAILY), 415-435 (LGGCLPILLQMPIFIALYWTF), 453-473 (LSAQDPYFILPILMGASMFLL), and 492-512 (FMPLIFMVFFLFFPAGLVLYW).

This sequence belongs to the OXA1/ALB3/YidC family. Type 1 subfamily. In terms of assembly, interacts with the Sec translocase complex via SecD. Specifically interacts with transmembrane segments of nascent integral membrane proteins during membrane integration.

It localises to the cell inner membrane. Functionally, required for the insertion and/or proper folding and/or complex formation of integral membrane proteins into the membrane. Involved in integration of membrane proteins that insert both dependently and independently of the Sec translocase complex, as well as at least some lipoproteins. Aids folding of multispanning membrane proteins. The chain is Membrane protein insertase YidC from Histophilus somni (strain 129Pt) (Haemophilus somnus).